The chain runs to 424 residues: Serine--tRNA ligase (424 aa).

232 to 234 is an L-serine binding site; sequence TAE. 263–265 provides a ligand contact to ATP; it reads RQE. Glutamate 286 serves as a coordination point for L-serine. Position 350-353 (350-353) interacts with ATP; the sequence is EIGS. Serine 386 contributes to the L-serine binding site.

The protein belongs to the class-II aminoacyl-tRNA synthetase family. Type-1 seryl-tRNA synthetase subfamily. As to quaternary structure, homodimer. The tRNA molecule binds across the dimer.

Its subcellular location is the cytoplasm. The enzyme catalyses tRNA(Ser) + L-serine + ATP = L-seryl-tRNA(Ser) + AMP + diphosphate + H(+). It carries out the reaction tRNA(Sec) + L-serine + ATP = L-seryl-tRNA(Sec) + AMP + diphosphate + H(+). It functions in the pathway aminoacyl-tRNA biosynthesis; selenocysteinyl-tRNA(Sec) biosynthesis; L-seryl-tRNA(Sec) from L-serine and tRNA(Sec): step 1/1. Its function is as follows. Catalyzes the attachment of serine to tRNA(Ser). Is also able to aminoacylate tRNA(Sec) with serine, to form the misacylated tRNA L-seryl-tRNA(Sec), which will be further converted into selenocysteinyl-tRNA(Sec). This Aster yellows witches'-broom phytoplasma (strain AYWB) protein is Serine--tRNA ligase.